The sequence spans 360 residues: MQLIAFLAALGVPVAFAATIPSVPLNHSMIDVKLSAAGNSMVKATITNNGDRALNLLRFNTIMDEHPTRKVMVYQNGAEVQFTGMLPRYMMSNLTPDYFVSLGPKASVEHSFDLAATHDLSRGGKITVMAQGTVPTAEEHGTTITGHTVYESNKITMEVDGNKAAAVVQAMGKVKAGSIDKRSKVVTSSCHGNQLQVLQTALANSARLSQAAAKAAQSNPRKLQEYFKATDSGTVQKVVSRFMSVARESSSNSAGGTTYYCNDSMGGCHPGVLAYTLPSQNLVVNCPIYYSDIPALNKRCHGQDQATTTLHEFTHNPAVVSPFAQDLGYGYDRVAALPASKAIQNADTYALFANAIYVGC.

Residues 1–17 (MQLIAFLAALGVPVAFA) form the signal peptide. Residues 18–182 (ATIPSVPLNH…KVKAGSIDKR (165 aa)) constitute a propeptide that is removed on maturation. C190 and C261 are joined by a disulfide. N-linked (GlcNAc...) asparagine glycosylation is present at N262. Cystine bridges form between C268-C286 and C300-C360. Residue H311 participates in Zn(2+) binding. E312 is an active-site residue. Zn(2+) is bound by residues H315 and D326.

This sequence belongs to the peptidase M35 family. The cofactor is Zn(2+).

The protein resides in the secreted. It carries out the reaction Preferential cleavage of bonds with hydrophobic residues in P1'. Also 3-Asn-|-Gln-4 and 8-Gly-|-Ser-9 bonds in insulin B chain.. Functionally, probable secreted metalloprotease that shows high activities on basic nuclear substrates such as histone and protamine. May be involved in virulence. The polypeptide is Probable neutral protease 2 homolog MCYG_04257 (Arthroderma otae (strain ATCC MYA-4605 / CBS 113480) (Microsporum canis)).